Here is a 448-residue protein sequence, read N- to C-terminus: MKAVVIGAGEVGYHIAKFLSLTHDVIVIENDEDALRRADELDVQVVEGNGANADILASVLPDVDILVAVTGVDEVNIVACMTAKLILRAHPGWKETKTIARVSNPDYIDVPVTSRAQVGVDIMICPELALASEVAEVLSNPSAIDAEMFAGGKVQMMEFAIRPDNRLVGKRMQDIELEDCCIVSAIFRNNDIIIPHGDDFIKANDHMVVVGKPRAMADLENVFGNEGPHRNRILLIGCGIVGFYLAKIIDKDENADLKVIEYRKSRCIEVAEMLENALILNGDGTDVNLLREENIEDMDVVIAVTDNDEKNLLCSLLAKQMGAKKVIARADRSDYVPLFEMVGIDIAVSPREATVNEVLKLTMGKGIEALATIEGEKAEIIEYTASGQSKIVGKPLSKIKFPKGAIVTMVVHDDDVIIPRGEFIIREGDRVIIFALSSAVRSVEKLFK.

Positions 1 to 124 (MKAVVIGAGE…RAQVGVDIMI (124 aa)) constitute an RCK N-terminal 1 domain. NAD(+) is bound by residues 7–11 (GAGEV), glutamate 29, 70–71 (TG), and arginine 101. Residues 144-225 (IDAEMFAGGK…MADLENVFGN (82 aa)) form the RCK C-terminal 1 domain. An RCK N-terminal 2 domain is found at 230-348 (RNRILLIGCG…FEMVGIDIAV (119 aa)). 232 to 262 (RILLIGCGIVGFYLAKIIDKDENADLKVIEY) is a binding site for NAD(+). The region spanning 368 to 448 (EALATIEGEK…AVRSVEKLFK (81 aa)) is the RCK C-terminal 2 domain.

Its function is as follows. Part of a potassium transport system. The polypeptide is Trk system potassium uptake protein TrkA homolog 2 (trkA2) (Methanosarcina mazei (strain ATCC BAA-159 / DSM 3647 / Goe1 / Go1 / JCM 11833 / OCM 88) (Methanosarcina frisia)).